The primary structure comprises 160 residues: Cell cycle regulator of non-homologous end joining (160 aa).

Residue methionine 1 is modified to N-acetylmethionine. A KBM motif is present at residues 1-21 (METLKSDNKKRVLPSWMTAPG). Residues 78-152 (KPWEQPSLVA…EGKEEEDELK (75 aa)) form a disordered region. The span at 99–109 (ESPHTSSPGSS) shows a compositional bias: low complexity. An XLM motif is present at residues 150-160 (ELKYVREIFFS).

Interacts (via KBM motif) with XRCC5/Ku80 and XRCC6/Ku70 heterodimer. Interacts (via XLF motif) with TRIM28/KAP1, ATM, MRE11, NBN and RAD50. Interacts with splicing factor SF3B1. Interacts with ERCC6L2; this interaction is DNA independent.

It is found in the cytoplasm. The protein resides in the nucleus. The protein localises to the chromosome. Functionally, cell-cycle-specific regulator of classical non-homologous end joining (NHEJ) of DNA double-strand break (DSB) repair, which can act both as an activator or inhibitor of NHEJ, depending on the cell cycle phase. Acts as a regulator of DNA repair pathway choice by specifically inhibiting classical NHEJ during the S and G2 phases, thereby promoting error-free repair by homologous recombination during cell cycle phases when sister chromatids are present. Preferentially protects single-stranded overhangs at break sites by inhibiting classical NHEJ, thereby creating a local environment that favors homologous recombination. Acts via interaction with XRCC5/Ku80 and XRCC6/Ku70. In contrast, acts as an activator of NHEJ during G1 phase of the cell cycle: promotes classical NHEJ in G1 phase cells via multivalent interactions that increase the affinity of DNA damage response proteins for DSB-associated chromatin. Also involved in immunoglobulin V(D)J recombination. May also act as an indirect regulator of proteasome. In Rattus norvegicus (Rat), this protein is Cell cycle regulator of non-homologous end joining.